Consider the following 248-residue polypeptide: Pulmonary surfactant-associated protein A (248 aa).

A signal peptide spans 1–20 (MSLGSLAFTLFLTVVAGIKC). Asparagine 21 carries an N-linked (GlcNAc...) asparagine glycan. Residues 28–100 (GSPGIPGTPG…PGERGLPGFP (73 aa)) form the Collagen-like domain. Positions 28-100 (GSPGIPGTPG…PGERGLPGFP (73 aa)) are disordered. Residues proline 30, proline 33, proline 36, proline 42, proline 54, proline 57, proline 63, proline 67, proline 70, and proline 76 each carry the 4-hydroxyproline modification. Positions 42–51 (PGRDGRDGIK) are enriched in basic and acidic residues. Positions 54–65 (PGPPGPMGPPGG) are enriched in pro residues. Low complexity predominate over residues 69 to 82 (LPGRDGLPGAPGAP). The span at 84-93 (EHGDKGEPGE) shows a compositional bias: basic and acidic residues. One can recognise a C-type lectin domain in the interval 132–248 (LSVGDKVFST…LQYRLAICEF (117 aa)). Cystine bridges form between cysteine 155-cysteine 246 and cysteine 224-cysteine 238. The N-linked (GlcNAc...) asparagine glycan is linked to asparagine 207. Ca(2+) contacts are provided by glutamate 215, arginine 217, asparagine 234, and aspartate 235.

Belongs to the SFTPA family. Oligomeric complex of 6 set of homotrimers.

The protein resides in the secreted. Its subcellular location is the extracellular space. The protein localises to the extracellular matrix. It localises to the surface film. In terms of biological role, in presence of calcium ions, it binds to surfactant phospholipids and contributes to lower the surface tension at the air-liquid interface in the alveoli of the mammalian lung and is essential for normal respiration. Enhances the expression of MYO18A/SP-R210 on alveolar macrophages. This is Pulmonary surfactant-associated protein A (Sftpa1) from Mus musculus (Mouse).